The primary structure comprises 245 residues: 1-(5-phosphoribosyl)-5-[(5-phosphoribosylamino)methylideneamino] imidazole-4-carboxamide isomerase (245 aa).

Catalysis depends on aspartate 11, which acts as the Proton acceptor. Aspartate 132 serves as the catalytic Proton donor.

It belongs to the HisA/HisF family.

It localises to the cytoplasm. It carries out the reaction 1-(5-phospho-beta-D-ribosyl)-5-[(5-phospho-beta-D-ribosylamino)methylideneamino]imidazole-4-carboxamide = 5-[(5-phospho-1-deoxy-D-ribulos-1-ylimino)methylamino]-1-(5-phospho-beta-D-ribosyl)imidazole-4-carboxamide. Its pathway is amino-acid biosynthesis; L-histidine biosynthesis; L-histidine from 5-phospho-alpha-D-ribose 1-diphosphate: step 4/9. The sequence is that of 1-(5-phosphoribosyl)-5-[(5-phosphoribosylamino)methylideneamino] imidazole-4-carboxamide isomerase from Bacillus licheniformis (strain ATCC 14580 / DSM 13 / JCM 2505 / CCUG 7422 / NBRC 12200 / NCIMB 9375 / NCTC 10341 / NRRL NRS-1264 / Gibson 46).